The sequence spans 160 residues: Cytochrome b6-f complex subunit 4 (160 aa).

Transmembrane regions (helical) follow at residues 36-56 (LLYV…GLAV), 95-115 (LLGV…PFIE), and 131-151 (LVFI…CLPI).

The protein belongs to the cytochrome b family. PetD subfamily. The 4 large subunits of the cytochrome b6-f complex are cytochrome b6, subunit IV (17 kDa polypeptide, petD), cytochrome f and the Rieske protein, while the 4 small subunits are petG, petL, petM and petN. The complex functions as a dimer.

It localises to the plastid. The protein resides in the chloroplast thylakoid membrane. Functionally, component of the cytochrome b6-f complex, which mediates electron transfer between photosystem II (PSII) and photosystem I (PSI), cyclic electron flow around PSI, and state transitions. This chain is Cytochrome b6-f complex subunit 4, found in Trieres chinensis (Marine centric diatom).